The sequence spans 533 residues: Probable protein kinase UbiB (533 aa).

A helical transmembrane segment spans residues 24–44 (LILELPMLPWWLRLLGATLPW). The Protein kinase domain maps to 126-494 (RFEREPLASA…WKGSRHDWLG (369 aa)). ATP contacts are provided by residues 132 to 140 (LASASVAQV) and lysine 154. Aspartate 289 (proton acceptor) is an active-site residue. Residues 510–530 (LGQQLEAWPAWVMLAGGVFLI) traverse the membrane as a helical segment.

This sequence belongs to the ABC1 family. UbiB subfamily.

It localises to the cell inner membrane. The protein operates within cofactor biosynthesis; ubiquinone biosynthesis [regulation]. Its function is as follows. Is probably a protein kinase regulator of UbiI activity which is involved in aerobic coenzyme Q (ubiquinone) biosynthesis. In Pseudomonas aeruginosa (strain ATCC 15692 / DSM 22644 / CIP 104116 / JCM 14847 / LMG 12228 / 1C / PRS 101 / PAO1), this protein is Probable protein kinase UbiB.